The sequence spans 116 residues: Putative RNase MJ0125 (116 aa).

Active-site residues include Arg-76 and His-81. Residues 76-83 (RDKLIHQY) carry the RX(4)HXY motif motif. O-di-AMP-tyrosine is present on Tyr-83.

Belongs to the HepT RNase toxin family. In terms of assembly, homodimer, probably forms a complex with cognate antitoxin MJ0126. In terms of processing, modified by cognate antitoxin MJ0126; probably at least 2 successive AMPylation events occur on Tyr-83.

In terms of biological role, probable toxic component of a putative type VII toxin-antitoxin (TA) system, probably an RNase. Probably neutralized by cognate antitoxin MJ0126. Neutralization may be due to AMPylation by MJ0126. This chain is Putative RNase MJ0125, found in Methanocaldococcus jannaschii (strain ATCC 43067 / DSM 2661 / JAL-1 / JCM 10045 / NBRC 100440) (Methanococcus jannaschii).